The sequence spans 388 residues: MNALEITQKLISYPTITPKECGIFEYIKSLFPAFKTLECGENGVKNLFLYRIFNSPKEHAEKEHAKEKHAKENVKPLHFCFAGHIDVVPPGDNWQSDPFKPIIKEGFLYGRGAQDMKGGVGAFLSASLNFNPKTPFLLSILLTSDEEGPGIFGTRLMLEKLKEKNLLPHMAIVAEPTCEKVLGDSIKIGRRGSINGKLILKGVQGHVAYPKKCQNPIDALASVLPLISGVHLDDGDEYFDPSKLVITNLHAGLGANNVTPGSVEITFNARHSLKTTKESLKEYLEKVLKDLPHTLELESSSSPFITTSHSKLTSVLKENILKTCRTTPLLNTKGGTSDARFFSAHGIEVVEFGAINDRIHAIDERVSLKELELLEKVFLGVLEDLSEK.

Residue H84 coordinates Zn(2+). D86 is an active-site residue. Residue D115 participates in Zn(2+) binding. The active-site Proton acceptor is E146. Zn(2+) contacts are provided by E147, E175, and H360.

The protein belongs to the peptidase M20A family. DapE subfamily. As to quaternary structure, homodimer. Zn(2+) is required as a cofactor. Co(2+) serves as cofactor.

It catalyses the reaction N-succinyl-(2S,6S)-2,6-diaminopimelate + H2O = (2S,6S)-2,6-diaminopimelate + succinate. The protein operates within amino-acid biosynthesis; L-lysine biosynthesis via DAP pathway; LL-2,6-diaminopimelate from (S)-tetrahydrodipicolinate (succinylase route): step 3/3. Functionally, catalyzes the hydrolysis of N-succinyl-L,L-diaminopimelic acid (SDAP), forming succinate and LL-2,6-diaminopimelate (DAP), an intermediate involved in the bacterial biosynthesis of lysine and meso-diaminopimelic acid, an essential component of bacterial cell walls. This Helicobacter pylori (strain G27) protein is Succinyl-diaminopimelate desuccinylase.